We begin with the raw amino-acid sequence, 100 residues long: Small ribosomal subunit protein uS14c (100 aa).

This sequence belongs to the universal ribosomal protein uS14 family. Part of the 30S ribosomal subunit.

The protein resides in the plastid. The protein localises to the chloroplast. Binds 16S rRNA, required for the assembly of 30S particles. This Trieres chinensis (Marine centric diatom) protein is Small ribosomal subunit protein uS14c.